We begin with the raw amino-acid sequence, 528 residues long: Tyrosine-protein kinase transforming protein Yes (528 aa).

Over residues 1–12 (DKGPAMKYRTDN) the composition is skewed to basic and acidic residues. Residues 1–35 (DKGPAMKYRTDNTPEPISSHVSHYGSDSSQATQSP) are disordered. Over residues 18–29 (SSHVSHYGSDSS) the composition is skewed to low complexity. Positions 81–142 (GGGTVFVALY…PSNYVAPADS (62 aa)) constitute an SH3 domain. Residues 148–245 (WYFGKMGRKD…GLCHKLTTVC (98 aa)) form the SH2 domain. In terms of domain architecture, Protein kinase spans 267–520 (LRLEVKLGQG…YIQSFLEDYF (254 aa)). Residues 273–281 (LGQGCFGEV) and K295 contribute to the ATP site. D386 (proton acceptor) is an active-site residue. Y416 is subject to Phosphotyrosine; by autocatalysis.

The protein belongs to the protein kinase superfamily. Tyr protein kinase family. SRC subfamily.

The catalysed reaction is L-tyrosyl-[protein] + ATP = O-phospho-L-tyrosyl-[protein] + ADP + H(+). In Galliformes (Y73SV), this protein is Tyrosine-protein kinase transforming protein Yes (V-YES).